Here is a 455-residue protein sequence, read N- to C-terminus: Cysteinylglycine-S-conjugate dipeptidase (455 aa).

Histidine 92 is a Zn(2+) binding site. Aspartate 94 is an active-site residue. Aspartate 125 contributes to the Zn(2+) binding site. Glutamate 158 serves as the catalytic Proton acceptor. The Zn(2+) site is built by glutamate 159, glutamate 163, and histidine 428.

Belongs to the peptidase M20F family. It depends on Zn(2+) as a cofactor.

It catalyses the reaction an S-substituted L-cysteinylglycine + H2O = an S-substituted L-cysteine + glycine. The enzyme catalyses S-(1-hydroxy-3-methylhexan-3-yl)-L-cysteinylglycine + H2O = S-(1-hydroxy-3-methylhexan-3-yl)-L-cysteine + glycine. It carries out the reaction S-benzyl-L-cysteinylglycine + H2O = S-benzyl-L-cysteine + glycine. Its function is as follows. Metallopeptidase that hydrolyzes the Cys-Gly bond of Cys-Gly-S-conjugates. Involved in the formation of the human body odorant 3-methyl-3-sulfanylhexan-1-ol (3M3SH) from odorless axilla secretions. Catalyzes the hydrolysis of the Cys-Gly bond of the Cys-Gly-S-conjugate of 3M3SH, a key precursor secreted by apocrine glands in human axilla skin. The Cys-S-conjugate obtained is then cleaved by the Cys-S-conjugate beta-lyase MetC, which finally releases 3M3SH. This chain is Cysteinylglycine-S-conjugate dipeptidase, found in Corynebacterium striatum.